The sequence spans 524 residues: MQPPASAGLFRSPENLPWPYNYMDYLVAGFLVLTAGILLRPWLWLRLRNSKTKDGDEEEDNEEKKKGMIPNGSLGWPVIGETLNFIACGYSSRPVTFMDKRKSLYGKVFKTNIIGTPIIISTDAEVNKVVLQNHGNTFVPAYPKSITELLGENSILSINGPHQKRLHTLIGAFLRSPHLKDRITRDIEASVVLTLASWAQLPLVHVQDEIKKMTFEILVKVLMSTSPGEDMNILKLEFEEFIKGLICIPIKFPGTRLYKSLKAKERLIKMVKKVVEERQVAMTTTSPANDVVDVLLRDGGDSEKQSQPSDFVSGKIVEMMIPGEETMPTAMTLAVKFLSDNPVALAKLVEENMEMKRRKLELGEEYKWTDYMSLSFTQNVINETLRMANIINGVWRKALKDVEIKGYLIPKGWCVLASFISVHMDEDIYDNPYQFDPWRWDRINGSANSSICFTPFGGGQRLCPGLELSKLEISIFLHHLVTRYSWTAEEDEIVSFPTVKMKRRLPIRVATVDDSASPISLEDH.

Residues 25–45 (YLVAGFLVLTAGILLRPWLWL) traverse the membrane as a helical segment. Cysteine 463 is a heme binding site.

This sequence belongs to the cytochrome P450 family. The cofactor is heme. As to expression, widely expressed.

It localises to the endoplasmic reticulum membrane. It carries out the reaction 3-epi-6-deoxocathasterone + reduced [NADPH--hemoprotein reductase] + O2 = 6-deoxotyphasterol + oxidized [NADPH--hemoprotein reductase] + H2O + H(+). The enzyme catalyses (22S,24R)-22-hydroxy-5alpha-ergostan-3-one + reduced [NADPH--hemoprotein reductase] + O2 = 3-dehydro-6-deoxoteasterone + oxidized [NADPH--hemoprotein reductase] + H2O + H(+). The protein operates within plant hormone biosynthesis; brassinosteroid biosynthesis. Involved in brassinosteroid (BR) biosynthesis. Converts typhasterol (TY) to cathasterone (CS) and 6-deoxotyphasterol (6-deoxoTY) to 6-deoxocathasterone (6-deoxoCT). C-23 hydroxylase that converts directly (22S,24R)-22-hydroxy-5-alpha-ergostan-3-one and 3-epi-6-deoxocathasterone to 3-dehydro-6-deoxoteasterone (6-deoxo3DT, 6-deoxo3DHT) and 6-deoxotyphasterol (6-deoxoTY), respectively. These C-23 hydroxylation shortcuts bypass campestanol, 6-deoxocathasterone, and 6-deoxoteasterone (6-deoxoTE). Also catalyzes the conversion of cathasterone to teasterone (TE), (22S,24R)-22-hydroxyergost-4-en-3-one (22-OH-4-en-3-one) to (22R,23R)-22,23-dihydroxy-campest-4-en-3-one (22,23-diOH-4-en-3-one) and (22S)-22-hydroxycampesterol (22-OHCR) to (22R,23R)-22,23-dihydroxycampesterol (22,23-diOHCR). Required for the regulation of polar elongation of leaf cells. Required for the longitudinal elongation of floral organs. The polypeptide is 3-epi-6-deoxocathasterone 23-monooxygenase CYP90C1 (Arabidopsis thaliana (Mouse-ear cress)).